Reading from the N-terminus, the 136-residue chain is Large-conductance mechanosensitive channel (136 aa).

2 consecutive transmembrane segments (helical) span residues 10-30 (FAMR…AAFG) and 76-96 (GSFI…FSAV).

It belongs to the MscL family. As to quaternary structure, homopentamer.

The protein localises to the cell inner membrane. Functionally, channel that opens in response to stretch forces in the membrane lipid bilayer. May participate in the regulation of osmotic pressure changes within the cell. This is Large-conductance mechanosensitive channel from Yersinia enterocolitica serotype O:8 / biotype 1B (strain NCTC 13174 / 8081).